The primary structure comprises 227 residues: MKFAVIQFPGSNCDLDMLHAIRDSLGEEAEYVWHAETSLAGFDAVLLPGGFSYGDYLRTGAIAKFSSIMPEVLRFAEMGKPVLGVCNGFQILTEIGLLPGALIRNNNLHFICKTVPLRVANASTMFTGLYKEGEIIQVPVAHGEGNYYCDDETLLKLKDNNQIVFTYDSVNPNGSRADIAGIVNERGNVLGMMPHPERAVEEIIGGTDGLRLFESVVKAWKEEQVNA.

Residues 2-226 (KFAVIQFPGS…VKAWKEEQVN (225 aa)) form the Glutamine amidotransferase type-1 domain. The active-site Nucleophile is the C86. Active-site residues include H195 and E197.

In terms of assembly, part of the FGAM synthase complex composed of 1 PurL, 1 PurQ and 2 PurS subunits.

It is found in the cytoplasm. The enzyme catalyses N(2)-formyl-N(1)-(5-phospho-beta-D-ribosyl)glycinamide + L-glutamine + ATP + H2O = 2-formamido-N(1)-(5-O-phospho-beta-D-ribosyl)acetamidine + L-glutamate + ADP + phosphate + H(+). The catalysed reaction is L-glutamine + H2O = L-glutamate + NH4(+). It functions in the pathway purine metabolism; IMP biosynthesis via de novo pathway; 5-amino-1-(5-phospho-D-ribosyl)imidazole from N(2)-formyl-N(1)-(5-phospho-D-ribosyl)glycinamide: step 1/2. Its function is as follows. Part of the phosphoribosylformylglycinamidine synthase complex involved in the purines biosynthetic pathway. Catalyzes the ATP-dependent conversion of formylglycinamide ribonucleotide (FGAR) and glutamine to yield formylglycinamidine ribonucleotide (FGAM) and glutamate. The FGAM synthase complex is composed of three subunits. PurQ produces an ammonia molecule by converting glutamine to glutamate. PurL transfers the ammonia molecule to FGAR to form FGAM in an ATP-dependent manner. PurS interacts with PurQ and PurL and is thought to assist in the transfer of the ammonia molecule from PurQ to PurL. In Listeria monocytogenes serotype 4b (strain CLIP80459), this protein is Phosphoribosylformylglycinamidine synthase subunit PurQ.